The chain runs to 308 residues: HTH-type transcriptional regulator SsuR (308 aa).

The 59-residue stretch at M1–L59 folds into the HTH lysR-type domain. Residues L19 to K38 constitute a DNA-binding region (H-T-H motif).

The protein belongs to the LysR transcriptional regulatory family.

In terms of biological role, transcriptional regulator that is essential for the utilization of a number of organic sulfur sources of either environmental or human origin. Required for aliphatic sulfonate utilization. Binds to DNA at target promoter regions. Targets include the ssuDBC operon, the tauABC operon, three tauD-type genes and atsA. This Burkholderia cenocepacia (strain ATCC BAA-245 / DSM 16553 / LMG 16656 / NCTC 13227 / J2315 / CF5610) (Burkholderia cepacia (strain J2315)) protein is HTH-type transcriptional regulator SsuR.